The chain runs to 100 residues: Putative exopolysaccharide production repressor protein y4xQ (100 aa).

The next 2 helical transmembrane spans lie at 9–29 (ILWL…GSIS) and 35–55 (TMVG…FLLW). The interval 66-100 (TTGQFHGEEQPGDPRIAGTHGRTDGDPCFEDEDSR) is disordered.

This sequence to Rhizobium exopolysaccharide production repressor protein (ExoX).

It localises to the cell membrane. Could be involved in the inhibition of exopolysaccharide synthesis (EPS) and nodulation ability (nod). This is Putative exopolysaccharide production repressor protein y4xQ from Sinorhizobium fredii (strain NBRC 101917 / NGR234).